The primary structure comprises 253 residues: Rab GTPase-activating protein 1-like, isoform 10 (253 aa).

A coiled-coil region spans residues Ser-8 to Ser-222. The interval Thr-233–Thr-253 is disordered.

The chain is Rab GTPase-activating protein 1-like, isoform 10 (RABGAP1L) from Homo sapiens (Human).